We begin with the raw amino-acid sequence, 3390 residues long: MNNQRKKTGKPSINMLKRVRNRVSTGSQLAKRFSKGLLNGQGPMKLVMAFIAFLRFLAIPPTAGVLARWGTFKKSGAIKVLKGFKKEISNMLSIINKRKKTSLCLMMIMPAALAFHLTSRDGEPRMIVGKNERGKSLLFKTASGINMCTLIAMDLGEMCDDTVTYKCPHITEVEPEDIDCWCNLTSTWVTYGTCNQAGERRRDKRSVALAPHVGMGLDTRTQTWMSAEGAWRQVEKVETWALRHPGFTILALFLAHYIGTSLTQKVVIFILLMLVTPSMTMRCVGVGNRDFVEGLSGATWVDVVLEHGGCVTTMAKNKPTLDIELQKTEATQLATLRKLCIEGKITNITTDSRCPTQGEAVLPEEQDQNYVCKHTYVDRGWGNGCGLFGKGSLVTCAKFQCLEPIEGKVVQYENLKYTVIITVHTGDQHQVGNETQGVTAEITPQASTTEAILPEYGTLGLECSPRTGLDFNEMILLTMKNKAWMVHRQWFFDLPLPWTSGATTETPTWNRKELLVTFKNAHAKKQEVVVLGSQEGAMHTALTGATEIQNSGGTSIFAGHLKCRLKMDKLELKGMSYAMCTNTFVLKKEVSETQHGTILIKVEYKGEDAPCKIPFSTEDGQGKAHNGRLITANPVVTKKEEPVNIEAEPPFGESNIVIGIGDNALKINWYKKGSSIGKMFEATARGARRMAILGDTAWDFGSVGGVLNSLGKMVHQIFGSAYTALFSGVSWVMKIGIGVLLTWIGLNSKNTSMSFSCIAIGIITLYLGAVVQADMGCVINWKGKELKCGSGIFVTNEVHTWTEQYKFQADSPKRLATAIAGAWENGVCGIRSTTRMENLLWKQIANELNYILWENNIKLTVVVGDIIGVLEQGKRTLTPQPMELKYSWKTWGKAKIVTAETQNSSFIIDGPNTPECPSASRAWNVWEVEDYGFGVFTTNIWLKLREVYTQLCDHRLMSAAVKDERAVHADMGYWIESQKNGSWKLEKASLIEVKTCTWPKSHTLWSNGVLESDMIIPKSLAGPISQHNHRPGYHTQTAGPWHLGKLELDFNYCEGTTVVITENCGTRGPSLRTTTVSGKLIHEWCCRSCTLPPLRYMGEDGCWYGMEIRPISEKEENMVKSLVSAGSGKVDNFTMGVLCLAILFEEVMRGKFGKKHMIAGVFFTFVLLLSGQITWRDMAHTLIMIGSNASDRMGMGVTYLALIATFKIQPFLALGFFLRKLTSRENLLLGVGLAMATTLQLPEDIEQMANGIALGLMALKLITQFETYQLWTALISLTCSNTMFTLTVAWRTATLILAGVSLLPVCQSSSMRKTDWLPMAVAAMGVPPLPLFIFSLKDTLKRRSWPLNEGVMAVGLVSILASSLLRNDVPMAGPLVAGGLLIACYVITGTSADLTVEKAADITWEEEAEQTGVSHNLMITVDDDGTMRIKDDETENILTVLLKTALLIVSGVFPYSIPATLLVWHTWQKQTQRSGVLWDVPSPPETQKAELEEGVYRIKQQGIFGKTQVGVGVQKEGVFHTMWHVTRGAVLTYNGKRLEPNWASVKKDLISYGGGWRLSAQWQKGEEVQVIAVEPGKNPKNFQTMPGTFQTTTGEIGAIALDFKPGTSGSPIINREGKVVGLYGNGVVTKNGGYVSGIAQTNAEPDGPTPELEEEMFKKRNLTIMDLHPGSGKTRKYLPAIVREAIKRRLRTLILAPTRVVAAEMEEALKGLPIRYQTTATKSEHTGREIVDLMCHATFTMRLLSPVRVPNYNLIIMDEAHFTDPASIAARGYISTRVGMGEAAAIFMTATPPGTADAFPQSNAPIQDEERDIPERSWNSGNEWITDFAGKTVWFVPSIKAGNDIANCLRKNGKKVIQLSRKTFDTEYQKTKLNDWDFVVTTDISEMGANFKADRVIDPRRCLKPVILTDGPERVILAGPMPVTAASAAQRRGRVGRNPQKENDQYIFTGQPLNNDEDHAHWTEAKMLLDNINTPEGIIPALFEPEREKSAAIDGEYRLKGESRKTFVELMRRGDLPVWLAHKVASEGIKYTDRKWCFDGQRNNQILEENMDVEIWTKEGEKKKLRPRWLDARTYSDPLALKEFKDFAAGRKSIALDLVTEIGRVPSHLAHRTRNALDNLVMLHTSEHGGRAYRHAVEELPETMETLLLLGLMILLTGGAMLFLISGKGIGKTSIGLICVIASSGMLWMAEIPLQWIASAIVLEFFMMVLLIPEPEKQRTPQDNQLAYVVIGILTLAAIIAANEMGLLETTKRDLGMSKEPGVVSPTSYLDVDLHPASAWTLYAVATTVITPMLRHTIENSTANVSLAAIANQAVVLMGLDKGWPISKMDLGVPLLALGCYSQVNPLTLTAAVLLLITHYAIIGPGLQAKATREAQKRTAAGIMKNPTVDGIMTIDLDPVIYDSKFEKQLGQVMLLVLCAVQLLLMRTSWALCEALTLATGPITTLWEGSPGKFWNTTIAVSMANIFRGSYLAGAGLAFSIMKSVGTGKRGTGSQGETLGEKWKKKLNQLSRKEFDLYKKSGITEVDRTEAKEGLKRGEITHHAVSRGSAKLQWFVERNMVIPEGRVIDLGCGRGGWSYYCAGLKKVTEVRGYTKGGPGHEEPVPMSTYGWNIVKLMSGKDVFYLPPEKCDTLLCDIGESSPSPTVEESRTIRVLKMVEPWLKNNQFCIKVLNPYMPTVIEHLERLQRKHGGMLVRNPLSRNSTHEMYWISNGTGNIVASVNMVSRLLLNRFTMTHRRPTIEKDVDLGAGTRHVNAEPETPNMDVIGERIKRIKEEHNSTWHYDDENPYKTWAYHGSYEVKATGSASSMINGVVKLLTKPWDVVPMVTQMAMTDTTPFGQQRVFKEKVDTRTPRSMPGTRRVMGITAEWLWRTLGRNKKPRLCTREEFTKKVRTNAAMGAVFTEENQWDSAKAAVEDEDFWKLVDRERELHKLGKCGSCVYNMMGKREKKLGEFGKAKGSRAIWYMWLGARYLEFEALGFLNEDHWFSRENSYSGVEGEGLHKLGYILRDISKIPGGAMYADDTAGWDTRITEDDLHNEEKITQQMDPEHRQLANAIFKLTYQNKVVKVQRPTPTGTVMDIISRKDQRGSGQVGTYGLNTFTNMEAQLIRQMEGEGVLSKADLENPHLPEKKITQWLETKGVERLKRMAISGDDCVVKPIDDRFANALLALNDMGKVRKDIPQWQPSKGWHDWQQVPFCSHHFHELIMKDGRKLVVPCRPQDELIGRARISQGAGWSLRETACLGKAYAQMWSLMYFHRRDLRLASNAICSAVPVHWVPTSRTTWSIHAHHQWMTTEDMLTVWNRVWIEDNPWMEDKTPVTTWENVPYLGKREDQWCGSLIGLTSRATWAQNIPTAIQQVRSLIGNEEFLDYMPSMKRFRKEEESEGAIW.

The interval 1-15 is interaction with host EXOC1; that stretch reads MNNQRKKTGKPSINM. Residues 1 to 100 lie on the Cytoplasmic side of the membrane; that stretch reads MNNQRKKTGK…MLSIINKRKK (100 aa). Residues 37–72 are hydrophobic; homodimerization of capsid protein C; it reads LLNGQGPMKLVMAFIAFLRFLAIPPTAGVLARWGTF. The propeptide at 101-114 is ER anchor for the capsid protein C, removed in mature form by serine protease NS3; sequence TSLCLMMIMPAALA. A helical membrane pass occupies residues 101–120; that stretch reads TSLCLMMIMPAALAFHLTSR. The Extracellular segment spans residues 121–243; it reads DGEPRMIVGK…VEKVETWALR (123 aa). An N-linked (GlcNAc...) asparagine; by host glycan is attached at Asn-183. A helical transmembrane segment spans residues 244 to 264; it reads HPGFTILALFLAHYIGTSLTQ. Residue Lys-265 is a topological domain, cytoplasmic. A helical transmembrane segment spans residues 266–280; that stretch reads VVIFILLMLVTPSMT. The Extracellular segment spans residues 281-723; the sequence is MRCVGVGNRD…VHQIFGSAYT (443 aa). Intrachain disulfides connect Cys-283–Cys-310, Cys-340–Cys-401, Cys-354–Cys-385, and Cys-372–Cys-396. Asn-347 is a glycosylation site (N-linked (GlcNAc...) asparagine; by host). The tract at residues 378–391 is fusion peptide; it reads DRGWGNGCGLFGKG. A glycan (N-linked (GlcNAc...) asparagine; by host) is linked at Asn-433. Cystine bridges form between Cys-463–Cys-563 and Cys-580–Cys-611. The chain crosses the membrane as a helical span at residues 724 to 744; that stretch reads ALFSGVSWVMKIGIGVLLTWI. Topologically, residues 745 to 750 are cytoplasmic; sequence GLNSKN. Residues 751 to 771 form a helical membrane-spanning segment; the sequence is TSMSFSCIAIGIITLYLGAVV. The Extracellular portion of the chain corresponds to 772–1193; that stretch reads QADMGCVINW…MIGSNASDRM (422 aa). 6 disulfide bridges follow: Cys-777/Cys-788, Cys-828/Cys-916, Cys-952/Cys-996, Cys-1053/Cys-1102, Cys-1064/Cys-1086, and Cys-1085/Cys-1089. Residues Asn-903 and Asn-980 are each glycosylated (N-linked (GlcNAc...) asparagine; by host). N-linked (GlcNAc...) asparagine; by host glycosylation is found at Asn-1132 and Asn-1188. Residues 1194–1218 traverse the membrane as a helical segment; the sequence is GMGVTYLALIATFKIQPFLALGFFL. Residues 1219–1224 are Cytoplasmic-facing; that stretch reads RKLTSR. The helical transmembrane segment at 1225–1243 threads the bilayer; it reads ENLLLGVGLAMATTLQLPE. At 1244 to 1267 the chain is on the lumenal side; that stretch reads DIEQMANGIALGLMALKLITQFET. The helical transmembrane segment at 1268 to 1288 threads the bilayer; the sequence is YQLWTALISLTCSNTMFTLTV. Ala-1289 is a topological domain (cytoplasmic). Residues 1290 to 1308 traverse the membrane as a helical segment; the sequence is WRTATLILAGVSLLPVCQS. The Lumenal segment spans residues 1309 to 1315; sequence SSMRKTD. Residues 1316–1336 form a helical membrane-spanning segment; that stretch reads WLPMAVAAMGVPPLPLFIFSL. The Cytoplasmic segment spans residues 1337 to 1344; it reads KDTLKRRS. Residues 1345–1365 traverse the membrane as a helical segment; that stretch reads WPLNEGVMAVGLVSILASSLL. The Lumenal portion of the chain corresponds to 1366–1368; sequence RND. A helical membrane pass occupies residues 1369-1389; the sequence is VPMAGPLVAGGLLIACYVITG. At 1390-1443 the chain is on the cytoplasmic side; it reads TSADLTVEKAADITWEEEAEQTGVSHNLMITVDDDGTMRIKDDETENILTVLLK. Residues 1396 to 1435 form an interacts with and activates NS3 protease region; sequence VEKAADITWEEEAEQTGVSHNLMITVDDDGTMRIKDDETE. Residues 1444–1464 constitute an intramembrane region (helical); sequence TALLIVSGVFPYSIPATLLVW. At 1465–2146 the chain is on the cytoplasmic side; it reads HTWQKQTQRS…VEELPETMET (682 aa). Residues 1474 to 1651 enclose the Peptidase S7 domain; that stretch reads SGVLWDVPSP…NAEPDGPTPE (178 aa). Catalysis depends on charge relay system; for serine protease NS3 activity residues His-1524, Asp-1548, and Ser-1608. One can recognise a Helicase ATP-binding domain in the interval 1654 to 1810; the sequence is EEMFKKRNLT…QSNAPIQDEE (157 aa). Residues 1658 to 1661 form an important for RNA-binding region; that stretch reads KKRN. 1667–1674 contacts ATP; sequence LHPGSGKT. Residues 1758–1761 carry the DEAH box motif; sequence DEAH. The region spanning 1820 to 1986 is the Helicase C-terminal domain; that stretch reads SGNEWITDFA…GIIPALFEPE (167 aa). Position 1862 is an N6-acetyllysine; by host (Lys-1862). A helical transmembrane segment spans residues 2147 to 2167; the sequence is LLLLGLMILLTGGAMLFLISG. The Lumenal portion of the chain corresponds to 2168-2169; that stretch reads KG. Residues 2170-2190 constitute an intramembrane region (helical); the sequence is IGKTSIGLICVIASSGMLWMA. A topological domain (lumenal) is located at residue Glu-2191. A helical transmembrane segment spans residues 2192–2212; that stretch reads IPLQWIASAIVLEFFMMVLLI. The Cytoplasmic segment spans residues 2213-2227; it reads PEPEKQRTPQDNQLA. A helical membrane pass occupies residues 2228 to 2248; sequence YVVIGILTLAAIIAANEMGLL. At 2249 to 2273 the chain is on the lumenal side; it reads ETTKRDLGMSKEPGVVSPTSYLDVD. Residues 2274–2294 constitute an intramembrane region (helical); sequence LHPASAWTLYAVATTVITPML. Residues 2295–2305 are Lumenal-facing; sequence RHTIENSTANV. N-linked (GlcNAc...) asparagine; by host glycosylation is found at Asn-2300 and Asn-2304. Positions 2306 to 2326 form an intramembrane region, helical; sequence SLAAIANQAVVLMGLDKGWPI. Residues 2327 to 2346 are Lumenal-facing; it reads SKMDLGVPLLALGCYSQVNP. The chain crosses the membrane as a helical span at residues 2347 to 2367; that stretch reads LTLTAAVLLLITHYAIIGPGL. Over 2368–2412 the chain is Cytoplasmic; that stretch reads QAKATREAQKRTAAGIMKNPTVDGIMTIDLDPVIYDSKFEKQLGQ. The helical transmembrane segment at 2413 to 2433 threads the bilayer; sequence VMLLVLCAVQLLLMRTSWALC. Residues 2434–2458 lie on the Lumenal side of the membrane; sequence EALTLATGPITTLWEGSPGKFWNTT. N-linked (GlcNAc...) asparagine; by host glycosylation occurs at Asn-2456. The chain crosses the membrane as a helical span at residues 2459–2479; sequence IAVSMANIFRGSYLAGAGLAF. Over 2480-3390 the chain is Cytoplasmic; it reads SIMKSVGTGK…KEEESEGAIW (911 aa). One can recognise an mRNA cap 0-1 NS5-type MT domain in the interval 2492–2753; sequence TGSQGETLGE…DVDLGAGTRH (262 aa). Ser-2546 is an S-adenosyl-L-methionine binding site. Residue Ser-2546 is modified to Phosphoserine. The For 2'-O-MTase activity role is filled by Lys-2551. Positions 2567–2570 match the SUMO-interacting motif motif; sequence VIDL. Gly-2576, Trp-2577, Thr-2594, Lys-2595, Asp-2621, and Val-2622 together coordinate S-adenosyl-L-methionine. Asp-2636 acts as the For 2'-O-MTase activity in catalysis. Residue Ile-2637 participates in S-adenosyl-L-methionine binding. Catalysis depends on for 2'-O-MTase activity residues Lys-2670 and Glu-2706. Tyr-2708 lines the S-adenosyl-L-methionine pocket. Zn(2+) contacts are provided by Glu-2927, His-2931, Cys-2936, and Cys-2939. The RdRp catalytic domain maps to 3018–3168; sequence AMYADDTAGW…PIDDRFANAL (151 aa). Residues His-3202, Cys-3218, and Cys-3337 each contribute to the Zn(2+) site.

The protein in the N-terminal section; belongs to the class I-like SAM-binding methyltransferase superfamily. mRNA cap 0-1 NS5-type methyltransferase family. As to quaternary structure, homodimer. Interacts (via N-terminus) with host EXOC1 (via C-terminus); this interaction results in EXOC1 degradation through the proteasome degradation pathway. In terms of assembly, forms heterodimers with envelope protein E in the endoplasmic reticulum and Golgi. Homodimer; in the endoplasmic reticulum and Golgi. Interacts with protein prM. Interacts with non-structural protein 1. As to quaternary structure, homodimer; Homohexamer when secreted. Interacts with envelope protein E. In terms of assembly, interacts (via N-terminus) with serine protease NS3. Forms a heterodimer with serine protease NS3. May form homooligomers. As to quaternary structure, forms a heterodimer with NS2B. Interacts with NS4B. Interacts with unphosphorylated RNA-directed RNA polymerase NS5; this interaction stimulates RNA-directed RNA polymerase NS5 guanylyltransferase activity. In terms of assembly, interacts with host MAVS; this interaction inhibits the synthesis of IFN-beta. Interacts with host AUP1; the interaction occurs in the presence of Dengue virus NS4B and induces lipophagy which facilitates production of virus progeny particles. Interacts with serine protease NS3. As to quaternary structure, homodimer. Interacts with host STAT2; this interaction inhibits the phosphorylation of the latter, and, when all viral proteins are present (polyprotein), targets STAT2 for degradation. Interacts with serine protease NS3. Specific enzymatic cleavages in vivo yield mature proteins. Cleavages in the lumen of endoplasmic reticulum are performed by host signal peptidase, whereas cleavages in the cytoplasmic side are performed by serine protease NS3. Signal cleavage at the 2K-4B site requires a prior NS3 protease-mediated cleavage at the 4A-2K site. Post-translationally, cleaved in post-Golgi vesicles by a host furin, releasing the mature small envelope protein M, and peptide pr. This cleavage is incomplete as up to 30% of viral particles still carry uncleaved prM. In terms of processing, N-glycosylated. N-glycosylated. The excreted form is glycosylated and this is required for efficient secretion of the protein from infected cells. Post-translationally, acetylated by host KAT5. Acetylation modulates NS3 RNA-binding and unwinding activities and plays an important positive role for viral replication. In terms of processing, sumoylation of RNA-directed RNA polymerase NS5 increases NS5 protein stability allowing proper viral RNA replication. Phosphorylated on serines residues. This phosphorylation may trigger NS5 nuclear localization.

It localises to the virion. Its subcellular location is the host nucleus. The protein resides in the host cytoplasm. It is found in the host perinuclear region. The protein localises to the secreted. It localises to the virion membrane. Its subcellular location is the host endoplasmic reticulum membrane. The protein resides in the host mitochondrion. It carries out the reaction Selective hydrolysis of -Xaa-Xaa-|-Yaa- bonds in which each of the Xaa can be either Arg or Lys and Yaa can be either Ser or Ala.. The catalysed reaction is RNA(n) + a ribonucleoside 5'-triphosphate = RNA(n+1) + diphosphate. It catalyses the reaction a ribonucleoside 5'-triphosphate + H2O = a ribonucleoside 5'-diphosphate + phosphate + H(+). The enzyme catalyses ATP + H2O = ADP + phosphate + H(+). It carries out the reaction a 5'-end (5'-triphosphoguanosine)-ribonucleoside in mRNA + S-adenosyl-L-methionine = a 5'-end (N(7)-methyl 5'-triphosphoguanosine)-ribonucleoside in mRNA + S-adenosyl-L-homocysteine. The catalysed reaction is a 5'-end (N(7)-methyl 5'-triphosphoguanosine)-ribonucleoside in mRNA + S-adenosyl-L-methionine = a 5'-end (N(7)-methyl 5'-triphosphoguanosine)-(2'-O-methyl-ribonucleoside) in mRNA + S-adenosyl-L-homocysteine + H(+). Functionally, plays a role in virus budding by binding to the cell membrane and gathering the viral RNA into a nucleocapsid that forms the core of a mature virus particle. During virus entry, may induce genome penetration into the host cytoplasm after hemifusion induced by the surface proteins. Can migrate to the cell nucleus where it modulates host functions. Overcomes the anti-viral effects of host EXOC1 by sequestering and degrading the latter through the proteasome degradation pathway. Inhibits RNA silencing by interfering with host Dicer. Its function is as follows. Prevents premature fusion activity of envelope proteins in trans-Golgi by binding to envelope protein E at pH6.0. After virion release in extracellular space, gets dissociated from E dimers. In terms of biological role, acts as a chaperone for envelope protein E during intracellular virion assembly by masking and inactivating envelope protein E fusion peptide. prM is the only viral peptide matured by host furin in the trans-Golgi network probably to avoid catastrophic activation of the viral fusion activity in acidic Golgi compartment prior to virion release. prM-E cleavage is inefficient, and many virions are only partially matured. These uncleaved prM would play a role in immune evasion. Functionally, may play a role in virus budding. Exerts cytotoxic effects by activating a mitochondrial apoptotic pathway through M ectodomain. May display a viroporin activity. Binds to host cell surface receptor and mediates fusion between viral and cellular membranes. Envelope protein is synthesized in the endoplasmic reticulum in the form of heterodimer with protein prM. They play a role in virion budding in the ER, and the newly formed immature particle is covered with 60 spikes composed of heterodimer between precursor prM and envelope protein E. The virion is transported to the Golgi apparatus where the low pH causes dissociation of PrM-E heterodimers and formation of E homodimers. prM-E cleavage is inefficient, and many virions are only partially matured. These uncleaved prM would play a role in immune evasion. Its function is as follows. Involved in immune evasion, pathogenesis and viral replication. Once cleaved off the polyprotein, is targeted to three destinations: the viral replication cycle, the plasma membrane and the extracellular compartment. Essential for viral replication. Required for formation of the replication complex and recruitment of other non-structural proteins to the ER-derived membrane structures. Excreted as a hexameric lipoparticle that plays a role against host immune response. Antagonizing the complement function. Binds to the host macrophages and dendritic cells. Inhibits signal transduction originating from Toll-like receptor 3 (TLR3). In terms of biological role, disrupts the host endothelial glycocalyx layer of host pulmonary microvascular endothelial cells, inducing degradation of sialic acid and shedding of heparan sulfate proteoglycans. NS1 induces expression of sialidases, heparanase, and activates cathepsin L, which activates heparanase via enzymatic cleavage. These effects are probably linked to the endothelial hyperpermeability observed in severe dengue disease. Functionally, component of the viral RNA replication complex that functions in virion assembly and antagonizes the host immune response. Required cofactor for the serine protease function of NS3. May have membrane-destabilizing activity and form viroporins. Its function is as follows. Displays three enzymatic activities: serine protease, NTPase and RNA helicase. NS3 serine protease, in association with NS2B, performs its autocleavage and cleaves the polyprotein at dibasic sites in the cytoplasm: C-prM, NS2A-NS2B, NS2B-NS3, NS3-NS4A, NS4A-2K and NS4B-NS5. NS3 RNA helicase binds RNA and unwinds dsRNA in the 3' to 5' direction. In terms of biological role, regulates the ATPase activity of the NS3 helicase activity. NS4A allows NS3 helicase to conserve energy during unwinding. Plays a role in the inhibition of the host innate immune response. Interacts with host MAVS and thereby prevents the interaction between RIGI and MAVS. In turn, IFN-beta production is impaired. Interacts with host AUP1 which mediates induction of lipophagy in host cells and facilitates production of virus progeny particles. Functionally, functions as a signal peptide for NS4B and is required for the interferon antagonism activity of the latter. Induces the formation of ER-derived membrane vesicles where the viral replication takes place. Inhibits interferon (IFN)-induced host STAT1 phosphorylation and nuclear translocation, thereby preventing the establishment of cellular antiviral state by blocking the IFN-alpha/beta pathway. Its function is as follows. Replicates the viral (+) and (-) RNA genome, and performs the capping of genomes in the cytoplasm. NS5 methylates viral RNA cap at guanine N-7 and ribose 2'-O positions. Besides its role in RNA genome replication, also prevents the establishment of cellular antiviral state by blocking the interferon-alpha/beta (IFN-alpha/beta) signaling pathway. Inhibits host TYK2 and STAT2 phosphorylation, thereby preventing activation of JAK-STAT signaling pathway. In Dengue virus type 3 (strain Martinique/1243/1999) (DENV-3), this protein is Genome polyprotein (pol).